Here is a 242-residue protein sequence, read N- to C-terminus: Phosphoribosylaminoimidazole-succinocarboxamide synthase (242 aa).

This sequence belongs to the SAICAR synthetase family.

The catalysed reaction is 5-amino-1-(5-phospho-D-ribosyl)imidazole-4-carboxylate + L-aspartate + ATP = (2S)-2-[5-amino-1-(5-phospho-beta-D-ribosyl)imidazole-4-carboxamido]succinate + ADP + phosphate + 2 H(+). It functions in the pathway purine metabolism; IMP biosynthesis via de novo pathway; 5-amino-1-(5-phospho-D-ribosyl)imidazole-4-carboxamide from 5-amino-1-(5-phospho-D-ribosyl)imidazole-4-carboxylate: step 1/2. The protein is Phosphoribosylaminoimidazole-succinocarboxamide synthase of Magnetococcus marinus (strain ATCC BAA-1437 / JCM 17883 / MC-1).